The sequence spans 288 residues: Zinc finger protein ZAT9 (288 aa).

Residues 4–26 (YKCRVCFKSFVNGKALGGHMRSH) form a C2H2-type 1 zinc finger. 3 disordered regions span residues 20 to 82 (GGHM…LTRK), 101 to 123 (SQLG…DTTT), and 189 to 210 (GGHR…QRSE). Residues 37–52 (PSQLSYETESDVSSSD) are compositionally biased toward polar residues. C2H2-type zinc fingers lie at residues 173-195 (YKCE…RASH) and 224-246 (HECP…KRSH).

It localises to the nucleus. In terms of biological role, probable transcription factor that may be involved in stress responses. In Arabidopsis thaliana (Mouse-ear cress), this protein is Zinc finger protein ZAT9 (ZAT9).